Consider the following 69-residue polypeptide: Pantinin-1 (69 aa).

Positions 1-23 are cleaved as a signal peptide; the sequence is MKTQFVILMITVILMQMLVQTEG. Position 37 is a valine amide (Val37). A propeptide spanning residues 41-69 is cleaved from the precursor; it reads GLNDRDQLDDLFDSDLSDADIKLLKEMFK.

Belongs to the non-disulfide-bridged peptide (NDBP) superfamily. Short antimicrobial peptide (group 4) family. Expressed by the venom gland.

Its subcellular location is the secreted. It localises to the target cell membrane. Its function is as follows. Amphipathic peptide that possesses relatively strong activities against Gram-positive bacteria and a fungus, but has very weak antimicrobial activities against Gram-negative bacteria. Also exhibits very low hemolytic activities against human erythrocytes (64 uM induce 21% of hemolysis). Minimal inhibitory concentration (MIC) are the following: 8 uM against S.aureus, 32 uM against B.magaterium, 32 uM against M.luteus, 28 uM against vancomycin-resistant Enterococci, 14 uM against methicillin-resistant S.aureus, 62 uM against E.coli, &gt;87 uM against P.putida, &gt;87 uM against K.oxytoca, 76 uM against E.cloacae, 72 uM against S.enterica and 16 uM against the fungus C.tropicalis. The polypeptide is Pantinin-1 (Pandinus imperator (Emperor scorpion)).